Consider the following 251-residue polypeptide: Ditrans,polycis-undecaprenyl-diphosphate synthase ((2E,6E)-farnesyl-diphosphate specific) (251 aa).

The active site involves Asp-21. Asp-21 provides a ligand contact to Mg(2+). Substrate contacts are provided by residues Gly-22 to Arg-25, Trp-26, His-38, and Ser-66 to Glu-68. Asn-69 (proton acceptor) is an active-site residue. Substrate is bound by residues Trp-70, Arg-72, Arg-189, and Arg-195–Ser-197. Glu-208 is a binding site for Mg(2+).

The protein belongs to the UPP synthase family. Homodimer. Mg(2+) is required as a cofactor.

The catalysed reaction is 8 isopentenyl diphosphate + (2E,6E)-farnesyl diphosphate = di-trans,octa-cis-undecaprenyl diphosphate + 8 diphosphate. In terms of biological role, catalyzes the sequential condensation of isopentenyl diphosphate (IPP) with (2E,6E)-farnesyl diphosphate (E,E-FPP) to yield (2Z,6Z,10Z,14Z,18Z,22Z,26Z,30Z,34E,38E)-undecaprenyl diphosphate (di-trans,octa-cis-UPP). UPP is the precursor of glycosyl carrier lipid in the biosynthesis of bacterial cell wall polysaccharide components such as peptidoglycan and lipopolysaccharide. The chain is Ditrans,polycis-undecaprenyl-diphosphate synthase ((2E,6E)-farnesyl-diphosphate specific) from Pseudomonas syringae pv. tomato (strain ATCC BAA-871 / DC3000).